Consider the following 396-residue polypeptide: Maltose/maltodextrin-binding periplasmic protein (396 aa).

The N-terminal stretch at 1 to 26 (MKIKTGARILALSALTTMMFSASALA) is a signal peptide.

It belongs to the bacterial solute-binding protein 1 family. In terms of assembly, the complex is composed of two ATP-binding proteins (MalK), two transmembrane proteins (MalG and MalF) and a solute-binding protein (MalE).

The protein localises to the periplasm. Part of the ABC transporter complex MalEFGK involved in maltose/maltodextrin import. Binds maltose and higher maltodextrins. In Klebsiella aerogenes (Enterobacter aerogenes), this protein is Maltose/maltodextrin-binding periplasmic protein (malE).